We begin with the raw amino-acid sequence, 172 residues long: Translationally-controlled tumor protein homolog (172 aa).

Positions 1–172 (MKIYKDIITG…FKHGLDEEKC (172 aa)) constitute a TCTP domain.

The protein belongs to the TCTP family.

The protein localises to the cytoplasm. Its function is as follows. Involved in calcium binding and microtubule stabilization. The polypeptide is Translationally-controlled tumor protein homolog (Drosophila yakuba (Fruit fly)).